A 447-amino-acid chain; its full sequence is Probable tRNA methyltransferase 9B (447 aa).

The residue at position 212 (serine 212) is a Phosphoserine. Disordered stretches follow at residues alanine 274–aspartate 306 and tryptophan 320–aspartate 348. The segment covering alanine 276 to arginine 286 has biased composition (polar residues).

This sequence belongs to the methyltransferase superfamily.

Its function is as follows. May modify wobble uridines in specific arginine and glutamic acid tRNAs. Acts as a tumor suppressor by promoting the expression of LIN9. This chain is Probable tRNA methyltransferase 9B (Trmt9b), found in Mus musculus (Mouse).